The primary structure comprises 765 residues: 1,4-alpha-glucan branching enzyme GlgB (765 aa).

The active-site Nucleophile is D431. E484 functions as the Proton donor in the catalytic mechanism.

It belongs to the glycosyl hydrolase 13 family. GlgB subfamily. Monomer.

It catalyses the reaction Transfers a segment of a (1-&gt;4)-alpha-D-glucan chain to a primary hydroxy group in a similar glucan chain.. Its pathway is glycan biosynthesis; glycogen biosynthesis. Functionally, catalyzes the formation of the alpha-1,6-glucosidic linkages in glycogen by scission of a 1,4-alpha-linked oligosaccharide from growing alpha-1,4-glucan chains and the subsequent attachment of the oligosaccharide to the alpha-1,6 position. The polypeptide is 1,4-alpha-glucan branching enzyme GlgB (Synechococcus sp. (strain CC9311)).